A 351-amino-acid polypeptide reads, in one-letter code: Glycerol-1-phosphate dehydrogenase [NAD(P)+] (351 aa).

NAD(+) contacts are provided by residues 97–101 (GKVID) and 119–122 (TSPS). Substrate is bound at residue aspartate 124. Residue serine 128 participates in NAD(+) binding. Aspartate 171 contributes to the substrate binding site. 2 residues coordinate Zn(2+): aspartate 171 and histidine 251. Residue histidine 255 coordinates substrate. Histidine 267 serves as a coordination point for Zn(2+).

The protein belongs to the glycerol-1-phosphate dehydrogenase family. As to quaternary structure, homodimer. It depends on Zn(2+) as a cofactor.

The protein resides in the cytoplasm. The catalysed reaction is sn-glycerol 1-phosphate + NAD(+) = dihydroxyacetone phosphate + NADH + H(+). It carries out the reaction sn-glycerol 1-phosphate + NADP(+) = dihydroxyacetone phosphate + NADPH + H(+). Its pathway is membrane lipid metabolism; glycerophospholipid metabolism. Catalyzes the NAD(P)H-dependent reduction of dihydroxyacetonephosphate (DHAP or glycerone phosphate) to glycerol 1-phosphate (G1P). The G1P thus generated is used as the glycerophosphate backbone of phospholipids in the cellular membranes of Archaea. This chain is Glycerol-1-phosphate dehydrogenase [NAD(P)+], found in Saccharolobus islandicus (strain L.S.2.15 / Lassen #1) (Sulfolobus islandicus).